The chain runs to 276 residues: Proteasome chaperone 1 (276 aa).

The protein belongs to the PSMG1 family. As to quaternary structure, component of the 20S proteasome chaperone. Forms a heterodimer with ADD66 that binds to proteasome precursors.

It is found in the cytoplasm. In terms of biological role, involved in 20S proteasome assembly. The protein is Proteasome chaperone 1 (PBA1) of Saccharomyces cerevisiae (strain ATCC 204508 / S288c) (Baker's yeast).